The primary structure comprises 470 residues: GDP-Man:Man(3)GlcNAc(2)-PP-Dol alpha-1,2-mannosyltransferase (470 aa).

The Lumenal portion of the chain corresponds to 1-15 (MSDTVISLISHSITT). The helical transmembrane segment at 16–36 (VFYLVPLIIALIIPFSLYSGF) threads the bilayer. Topologically, residues 37–131 (RRKSKTVAFF…HYKHCTMLFQ (95 aa)) are cytoplasmic. The helical intramembrane region spans 132-152 (ALAGLILALEAWFRMVPAVFI). At 153–378 (DSMGYPLSLP…ISIHTMHNEH (226 aa)) the chain is on the cytoplasmic side. An intramembrane region (helical) is located at residues 379–399 (FGISVVEAMAASTIILSNDSG). Residues 400-470 (GPRMDIVKDY…HWNKEIEKVL (71 aa)) lie on the Cytoplasmic side of the membrane.

The protein belongs to the glycosyltransferase group 1 family. Glycosyltransferase 4 subfamily.

It is found in the endoplasmic reticulum membrane. It catalyses the reaction an alpha-D-Man-(1-&gt;3)-[alpha-D-Man-(1-&gt;6)]-beta-D-Man-(1-&gt;4)-beta-D-GlcNAc-(1-&gt;4)-alpha-D-GlcNAc-diphospho-di-trans,poly-cis-dolichol + 2 GDP-alpha-D-mannose = an alpha-D-Man-(1-&gt;2)-alpha-D-Man-(1-&gt;2)-alpha-D-Man-(1-&gt;3)-[alpha-D-Man-(1-&gt;6)]-beta-D-Man-(1-&gt;4)-beta-D-GlcNAc-(1-&gt;4)-alpha-D-GlcNAc-diphospho-di-trans,poly-cis-dolichol + 2 GDP + 2 H(+). It participates in protein modification; protein glycosylation. In terms of biological role, GDP-Man:Man(3)GlcNAc(2)-PP-Dol alpha-1,2-mannosyltransferase that operates in the biosynthetic pathway of dolichol-linked oligosaccharides, the glycan precursors employed in protein asparagine (N)-glycosylation. The assembly of dolichol-linked oligosaccharides begins on the cytosolic side of the endoplasmic reticulum membrane and finishes in its lumen. The sequential addition of sugars to dolichol pyrophosphate produces dolichol-linked oligosaccharides containing fourteen sugars, including two GlcNAcs, nine mannoses and three glucoses. Once assembled, the oligosaccharide is transferred from the lipid to nascent proteins by oligosaccharyltransferases. Catalyzes, on the cytoplasmic face of the endoplasmic reticulum, the addition of the fourth and fifth mannose residues to the dolichol-linked oligosaccharide chain, to produce Man(5)GlcNAc(2)-PP-dolichol core oligosaccharide. Man(5)GlcNAc(2)-PP-dolichol is a substrate for ALG3, the following enzyme in the biosynthetic pathway. This chain is GDP-Man:Man(3)GlcNAc(2)-PP-Dol alpha-1,2-mannosyltransferase, found in Caenorhabditis elegans.